Here is a 293-residue protein sequence, read N- to C-terminus: uncharacterized protein (293 aa).

This is an uncharacterized protein from Acanthamoeba polyphaga (Amoeba).